A 472-amino-acid polypeptide reads, in one-letter code: Aspartyl/glutamyl-tRNA(Asn/Gln) amidotransferase subunit B (472 aa).

The protein belongs to the GatB/GatE family. GatB subfamily. As to quaternary structure, heterotrimer of A, B and C subunits.

It carries out the reaction L-glutamyl-tRNA(Gln) + L-glutamine + ATP + H2O = L-glutaminyl-tRNA(Gln) + L-glutamate + ADP + phosphate + H(+). It catalyses the reaction L-aspartyl-tRNA(Asn) + L-glutamine + ATP + H2O = L-asparaginyl-tRNA(Asn) + L-glutamate + ADP + phosphate + 2 H(+). Allows the formation of correctly charged Asn-tRNA(Asn) or Gln-tRNA(Gln) through the transamidation of misacylated Asp-tRNA(Asn) or Glu-tRNA(Gln) in organisms which lack either or both of asparaginyl-tRNA or glutaminyl-tRNA synthetases. The reaction takes place in the presence of glutamine and ATP through an activated phospho-Asp-tRNA(Asn) or phospho-Glu-tRNA(Gln). The polypeptide is Aspartyl/glutamyl-tRNA(Asn/Gln) amidotransferase subunit B (Sulfolobus acidocaldarius (strain ATCC 33909 / DSM 639 / JCM 8929 / NBRC 15157 / NCIMB 11770)).